A 135-amino-acid polypeptide reads, in one-letter code: Hemoglobin subunit beta-3 (135 aa).

A Globin domain is found at 2–135; sequence HWTAEEKALV…VVDALSKAYQ (134 aa). Residues His-57 and His-81 each coordinate heme b.

This sequence belongs to the globin family. As to quaternary structure, hb 3 is a heterotetramer of two alpha and two beta-3 chains. In terms of tissue distribution, red blood cells (at protein level).

In terms of biological role, involved in oxygen transport from gills to the various peripheral tissues. In Somniosus microcephalus (Greenland sleeper shark), this protein is Hemoglobin subunit beta-3.